The chain runs to 324 residues: MNETNHSRVTEFVLLGLSSSRELQPFLFLTFSLLYLAILLGNFLIILTVTSDSRLHTPMYFLLANLSFIDVCVASFATPKMIADFLVERKTISFDACLAQIFFVHLFTGSEMVLLVSMAYDRYVAICKPLHYMTVMSRRVCVVLVLISWFVGFIHTTSQLAFTVNLPFCGPNKVDSFFCDLPLVTKLACIDTYVVSLLIVADSGFLSLSSFLLLVVSYTVILVTVRNRSSASMAKARSTLTAHITVVTLFFGPCIFIYVWPFSSYSVDKVLAVFYTIFTLILNPVIYTLRNKEVKAAMSKLKSRYLKPSQVSVVIRNVLFLETK.

The Extracellular segment spans residues 1–25 (MNETNHSRVTEFVLLGLSSSRELQP). N-linked (GlcNAc...) asparagine glycans are attached at residues asparagine 2 and asparagine 5. A helical transmembrane segment spans residues 26 to 49 (FLFLTFSLLYLAILLGNFLIILTV). Topologically, residues 50–57 (TSDSRLHT) are cytoplasmic. A helical membrane pass occupies residues 58–79 (PMYFLLANLSFIDVCVASFATP). Topologically, residues 80–100 (KMIADFLVERKTISFDACLAQ) are extracellular. An intrachain disulfide couples cysteine 97 to cysteine 189. Residues 101 to 120 (IFFVHLFTGSEMVLLVSMAY) traverse the membrane as a helical segment. Residues 121–139 (DRYVAICKPLHYMTVMSRR) are Cytoplasmic-facing. Residues 140–158 (VCVVLVLISWFVGFIHTTS) traverse the membrane as a helical segment. Residues 159–195 (QLAFTVNLPFCGPNKVDSFFCDLPLVTKLACIDTYVV) are Extracellular-facing. A helical transmembrane segment spans residues 196-219 (SLLIVADSGFLSLSSFLLLVVSYT). Residues 220 to 235 (VILVTVRNRSSASMAK) lie on the Cytoplasmic side of the membrane. A helical transmembrane segment spans residues 236–258 (ARSTLTAHITVVTLFFGPCIFIY). Over 259–269 (VWPFSSYSVDK) the chain is Extracellular. Residues 270-289 (VLAVFYTIFTLILNPVIYTL) traverse the membrane as a helical segment. Residues 290-324 (RNKEVKAAMSKLKSRYLKPSQVSVVIRNVLFLETK) are Cytoplasmic-facing.

It belongs to the G-protein coupled receptor 1 family.

It is found in the cell membrane. In terms of biological role, odorant receptor. This chain is Olfactory receptor 4K15 (OR4K15), found in Homo sapiens (Human).